We begin with the raw amino-acid sequence, 269 residues long: Signal recognition particle SEC65 subunit (269 aa).

Disordered stretches follow at residues 30 to 65 (RTPI…DKSV) and 236 to 269 (PMTK…KIRG). Positions 248-258 (QPQVKAPQAPK) are enriched in low complexity. A compositionally biased stretch (basic residues) spans 259-269 (QPKKKVMKIRG).

This sequence belongs to the SRP19 family. Fungal signal recognition particle consists of a 7S RNA molecule (scR1) and at least six protein subunits: SRP72, SRP68, SRP54, SEC65, SRP21 andSRP14.

It localises to the cytoplasm. Functionally, signal-recognition-particle assembly has a crucial role in targeting secretory proteins to the rough endoplasmic reticulum membrane. It must be involved intimately in the translocation of a wide variety of protein substrates. The protein is Signal recognition particle SEC65 subunit (SEC65) of Debaryomyces hansenii (strain ATCC 36239 / CBS 767 / BCRC 21394 / JCM 1990 / NBRC 0083 / IGC 2968) (Yeast).